Here is a 110-residue protein sequence, read N- to C-terminus: Waprin-Thr1 (110 aa).

An N-terminal signal peptide occupies residues 1-20; the sequence is MYKKGTILVLAYLLIATAVC. Residues 22–68 form the WAP domain; the sequence is LSYKEGHCPLRNSVSKCIPRCVSDYQCSFNEKCCPNKCGSESCVQAS. Disulfide bonds link Cys29-Cys55, Cys38-Cys59, Cys42-Cys54, and Cys48-Cys64.

The protein belongs to the venom waprin family. Cys-rich waprin subfamily. In terms of tissue distribution, expressed by the venom gland.

The protein localises to the secreted. Functionally, antimicrobial peptides with activity against Gram-positive and Gram-negative bacteria as well as fungi. Recognizes carbohydrates in the microbial cell walls, and induces structural damage to them. Also inhibits microbial serine proteases subtilisin A and proteinase K, as well as human and porcine elastases. Carbohydrates that are recognized are LPS, mannan, peptidoglycan, and N-acetl-D-glucosamine. The protein is Waprin-Thr1 of Apis mellifera (Honeybee).